A 105-amino-acid chain; its full sequence is MVKQIDSKDAFQEALDAAGDKLVVVDFSATWCGPCKMIKPFFHSLSEKYSNVVFLEVDVDDCQDVASECEVKCMPTFQFFKKGQKVGEFSGANKEKLEATINEFV.

The region spanning 2–105 (VKQIDSKDAF…KLEATINEFV (104 aa)) is the Thioredoxin domain. Lys3 is subject to N6-acetyllysine. Position 8 is an N6-succinyllysine (Lys8). Residues Cys32 and Cys35 each act as nucleophile in the active site. Cys32 and Cys35 are disulfide-bonded. Lys39 is subject to N6-acetyllysine. An S-nitrosocysteine mark is found at Cys62 and Cys69. Cys73 bears the S-nitrosocysteine; alternate mark. Position 94 is an N6-acetyllysine; alternate (Lys94). Position 94 is an N6-succinyllysine; alternate (Lys94).

It belongs to the thioredoxin family. In terms of assembly, homodimer; disulfide-linked. Interacts with TXNIP through the redox-active site. Interacts with MAP3K5 and CASP3. Interacts with APEX1; the interaction stimulates the FOS/JUN AP-1 DNA-binding activity in a redox-dependent manner. In the fully reduced protein, both Cys-69 and Cys-73 are nitrosylated in response to nitric oxide (NO). When two disulfide bonds are present in the protein, only Cys-73 is nitrosylated. Cys-73 can serve as donor for nitrosylation of target proteins.

Its subcellular location is the nucleus. It is found in the cytoplasm. The protein localises to the secreted. Functionally, participates in various redox reactions through the reversible oxidation of its active center dithiol to a disulfide and catalyzes dithiol-disulfide exchange reactions. Plays a role in the reversible S-nitrosylation of cysteine residues in target proteins, and thereby contributes to the response to intracellular nitric oxide. Nitrosylates the active site Cys of CASP3 in response to nitric oxide (NO), and thereby inhibits caspase-3 activity. Induces the FOS/JUN AP-1 DNA binding activity in ionizing radiation (IR) cells through its oxidation/reduction status and stimulates AP-1 transcriptional activity. This chain is Thioredoxin (TXN), found in Callithrix jacchus (White-tufted-ear marmoset).